Reading from the N-terminus, the 3718-residue chain is Laminin subunit alpha-5 (3718 aa).

A signal peptide spans 1–40; that stretch reads MAKRGGQLCAGSAPGALGPRSPAPRPLLLLLAGLALVGEA. Residues 46–304 enclose the Laminin N-terminal domain; it reads DGFSLHPPYF…SIKDISIGGR (259 aa). Asn-100, Asn-148, and Asn-248 each carry an N-linked (GlcNAc...) asparagine glycan. 12 cysteine pairs are disulfide-bonded: Cys-305/Cys-314, Cys-307/Cys-327, Cys-329/Cys-338, Cys-341/Cys-361, Cys-364/Cys-373, Cys-366/Cys-398, Cys-401/Cys-410, Cys-413/Cys-431, Cys-434/Cys-445, Cys-436/Cys-452, Cys-454/Cys-463, and Cys-466/Cys-476. 3 Laminin EGF-like domains span residues 305–363, 364–433, and 434–479; these read CVCH…ECQS, CNCH…VCRP, and CDCE…CYPL. N-linked (GlcNAc...) asparagine glycosylation is present at Asn-383. N-linked (GlcNAc...) asparagine glycosylation is present at Asn-457. The N-linked (GlcNAc...) asparagine glycan is linked to Asn-485. Intrachain disulfides connect Cys-500–Cys-512, Cys-502–Cys-521, Cys-523–Cys-532, Cys-535–Cys-544, Cys-547–Cys-559, Cys-549–Cys-566, Cys-568–Cys-577, Cys-580–Cys-590, Cys-593–Cys-605, Cys-595–Cys-611, Cys-613–Cys-622, Cys-625–Cys-635, Cys-638–Cys-650, Cys-640–Cys-656, Cys-658–Cys-667, Cys-670–Cys-680, Cys-683–Cys-695, Cys-685–Cys-702, Cys-704–Cys-713, Cys-716–Cys-731, Cys-752–Cys-761, Cys-764–Cys-779, Cys-782–Cys-796, Cys-784–Cys-802, Cys-804–Cys-813, Cys-816–Cys-831, Cys-834–Cys-846, Cys-836–Cys-853, and Cys-855–Cys-864. Laminin EGF-like domains are found at residues 500–546, 547–592, 593–637, 638–682, 683–728, 729–781, and 782–833; these read CDCN…SCHP, CQCS…LCQL, CGCS…DCHA, CACD…SCIP, CHCS…YCEA, GSCH…GCTR, and CSCD…GCRS. The Laminin EGF-like 11; truncated domain occupies 834-855; that stretch reads CRCDVGGALGQGCEPKTGACRC. The domain IV 1 (domain IV B) stretch occupies residues 856–1442; that stretch reads RPNTQGPTCS…SLFYNNGALP (587 aa). N-linked (GlcNAc...) asparagine glycosylation is found at Asn-905, Asn-926, and Asn-964. A disordered region spans residues 1253–1284; that stretch reads LTQSQELSPGAPPEGPQPRPPTAVDPNAEPTL. A compositionally biased stretch (pro residues) spans 1262–1275; the sequence is GAPPEGPQPRPPTA. Asn-1335 carries N-linked (GlcNAc...) asparagine glycosylation. Intrachain disulfides connect Cys-1443–Cys-1455, Cys-1445–Cys-1462, Cys-1464–Cys-1473, Cys-1476–Cys-1486, Cys-1489–Cys-1496, Cys-1491–Cys-1503, Cys-1505–Cys-1514, Cys-1517–Cys-1530, Cys-1533–Cys-1548, Cys-1535–Cys-1555, Cys-1557–Cys-1566, Cys-1569–Cys-1579, Cys-1582–Cys-1594, Cys-1584–Cys-1601, Cys-1603–Cys-1612, and Cys-1615–Cys-1630. Laminin EGF-like domains follow at residues 1443–1488, 1489–1532, 1533–1581, and 1582–1632; these read CGCH…NCRP, CDCG…GCEE, CNCS…SCRP, and CDCH…GCTR. The N-linked (GlcNAc...) asparagine glycan is linked to Asn-1534. Positions 1633–1642 constitute a Laminin EGF-like 16; first part domain; sequence CFCFGATERC. Residues 1646–1831 form the Laminin IV type A domain; that stretch reads NLARHEFVDM…RGPPASNVEL (186 aa). 2 short sequence motifs (cell attachment site) span residues 1723–1725 and 1839–1841; these read RGD. Residues 1832 to 1864 enclose the Laminin EGF-like 16; second part domain; sequence CMCPANYRGDSCQECAPGYYRDTKGLFLGRCVP. 24 disulfide bridges follow: Cys-1865–Cys-1874, Cys-1867–Cys-1881, Cys-1884–Cys-1893, Cys-1896–Cys-1912, Cys-1915–Cys-1930, Cys-1917–Cys-1939, Cys-1941–Cys-1950, Cys-1953–Cys-1968, Cys-1971–Cys-1986, Cys-1973–Cys-1993, Cys-1996–Cys-2005, Cys-2008–Cys-2022, Cys-2025–Cys-2035, Cys-2027–Cys-2042, Cys-2044–Cys-2053, Cys-2056–Cys-2069, Cys-2072–Cys-2083, Cys-2074–Cys-2090, Cys-2092–Cys-2101, Cys-2104–Cys-2116, Cys-2119–Cys-2126, Cys-2121–Cys-2133, Cys-2135–Cys-2144, and Cys-2147–Cys-2166. 6 consecutive Laminin EGF-like domains span residues 1865–1914, 1915–1970, 1971–2024, 2025–2071, 2072–2118, and 2119–2168; these read CQCH…PCVS, CPCP…SCQP, CDCS…NCTR, CDCS…GCRP, CACG…GCRR, and CQCP…HCEV. N-linked (GlcNAc...) asparagine glycosylation occurs at Asn-2021. The interval 2169-2735 is domain II and I; sequence CDHCVVLLLD…AQARSAASKV (567 aa). Asn-2198, Asn-2211, Asn-2365, Asn-2395, Asn-2425, Asn-2503, and Asn-2570 each carry an N-linked (GlcNAc...) asparagine glycan. 2 coiled-coil regions span residues 2205 to 2257 and 2330 to 2464; these read ARLH…SQAT and TRDL…ASLD. 2 coiled-coil regions span residues 2604 to 2621 and 2639 to 2705; these read ARKNQLAAQIQEAQAMLA and AEAL…LENR. An N-linked (GlcNAc...) asparagine glycan is attached at Asn-2709. Laminin G-like domains follow at residues 2736 to 2933, 2947 to 3119, 3128 to 3296, 3337 to 3511, and 3518 to 3689; these read KVSM…DKPC, GSYL…SFGC, TMTF…SVGC, AYQF…VTPC, and DGLF…MRGC. Cystine bridges form between Cys-2903/Cys-2933 and Cys-3094/Cys-3119. N-linked (GlcNAc...) asparagine glycans are attached at residues Asn-3111, Asn-3213, Asn-3261, and Asn-3291. Intrachain disulfides connect Cys-3265/Cys-3296 and Cys-3488/Cys-3511. 2 N-linked (GlcNAc...) asparagine glycosylation sites follow: Asn-3623 and Asn-3673. Cys-3661 and Cys-3689 are disulfide-bonded.

In terms of assembly, laminin is a complex glycoprotein, consisting of three different polypeptide chains (alpha, beta, gamma), which are bound to each other by disulfide bonds into a cross-shaped molecule comprising one long and three short arms with globules at each end. Alpha-5 is a subunit of laminin-10 (laminin-511), laminin-11 (laminin-521) and laminin-15 (laminin-523). In terms of tissue distribution, in adult, high levels in heart, lung, and kidney; lower in brain, muscle and testis; very low in liver, gut and skin.

The protein localises to the secreted. The protein resides in the extracellular space. It localises to the extracellular matrix. It is found in the basement membrane. Functionally, binding to cells via a high affinity receptor, laminin is thought to mediate the attachment, migration and organization of cells into tissues during embryonic development by interacting with other extracellular matrix components. Alpha-5 may be the major laminin alpha chain of adult epithelial and/or endothelial basal laminae. Plays a role in the regulation of skeletogenesis, through a mechanism that involves integrin-mediated signaling and PTK2B/PYK2. This Mus musculus (Mouse) protein is Laminin subunit alpha-5 (Lama5).